We begin with the raw amino-acid sequence, 208 residues long: N-(5'-phosphoribosyl)anthranilate isomerase (208 aa).

Belongs to the TrpF family.

The catalysed reaction is N-(5-phospho-beta-D-ribosyl)anthranilate = 1-(2-carboxyphenylamino)-1-deoxy-D-ribulose 5-phosphate. It functions in the pathway amino-acid biosynthesis; L-tryptophan biosynthesis; L-tryptophan from chorismate: step 3/5. The chain is N-(5'-phosphoribosyl)anthranilate isomerase from Neisseria gonorrhoeae (strain NCCP11945).